A 218-amino-acid chain; its full sequence is Octanoyltransferase (218 aa).

Residues Ala32–Asp214 enclose the BPL/LPL catalytic domain. Substrate contacts are provided by residues Arg71–His78, Ser143–Gly145, and Gly156–Ala158. Cys174 serves as the catalytic Acyl-thioester intermediate.

The protein belongs to the LipB family.

It localises to the cytoplasm. The catalysed reaction is octanoyl-[ACP] + L-lysyl-[protein] = N(6)-octanoyl-L-lysyl-[protein] + holo-[ACP] + H(+). The protein operates within protein modification; protein lipoylation via endogenous pathway; protein N(6)-(lipoyl)lysine from octanoyl-[acyl-carrier-protein]: step 1/2. Functionally, catalyzes the transfer of endogenously produced octanoic acid from octanoyl-acyl-carrier-protein onto the lipoyl domains of lipoate-dependent enzymes. Lipoyl-ACP can also act as a substrate although octanoyl-ACP is likely to be the physiological substrate. This Histophilus somni (strain 129Pt) (Haemophilus somnus) protein is Octanoyltransferase.